An 84-amino-acid chain; its full sequence is Small ribosomal subunit protein bS16 (84 aa).

The protein belongs to the bacterial ribosomal protein bS16 family.

This chain is Small ribosomal subunit protein bS16, found in Paraburkholderia phymatum (strain DSM 17167 / CIP 108236 / LMG 21445 / STM815) (Burkholderia phymatum).